Consider the following 535-residue polypeptide: 2-isopropylmalate synthase (535 aa).

The Pyruvate carboxyltransferase domain occupies 13-274 (VLIFDTTLRD…YFNPFLGRPP (262 aa)). Mn(2+)-binding residues include D22, H213, H215, and N249. The interval 414 to 535 (QLEFVQVSCG…LEQRALHPQA (122 aa)) is regulatory domain.

This sequence belongs to the alpha-IPM synthase/homocitrate synthase family. LeuA type 1 subfamily. As to quaternary structure, homodimer. Mn(2+) is required as a cofactor.

It localises to the cytoplasm. It carries out the reaction 3-methyl-2-oxobutanoate + acetyl-CoA + H2O = (2S)-2-isopropylmalate + CoA + H(+). Its pathway is amino-acid biosynthesis; L-leucine biosynthesis; L-leucine from 3-methyl-2-oxobutanoate: step 1/4. Its function is as follows. Catalyzes the condensation of the acetyl group of acetyl-CoA with 3-methyl-2-oxobutanoate (2-ketoisovalerate) to form 3-carboxy-3-hydroxy-4-methylpentanoate (2-isopropylmalate). The chain is 2-isopropylmalate synthase from Thermosynechococcus vestitus (strain NIES-2133 / IAM M-273 / BP-1).